A 238-amino-acid polypeptide reads, in one-letter code: MQLPNLQSATLLRRYKRFLADVELNNGEILTLHCANTGAMTGCGEKGDTVWFSTSDSKTRKYPHSWELTQLKNGQTVCINTHRSNQLTLEALQNKIITELAEYDEILPEVKYGVENSRIDFLLKGKNLPDCYVEVKSVTFVKNHLGLFPDAVTTRGQKHLRELIAMKKRGHRAVVFFAGLHDGFNRFTVAKSIDPDYAELLQQAVKEGVEVYSYAVKFDFSHQKPTALYLTNLVNYLE.

The protein belongs to the SfsA family.

This is Sugar fermentation stimulation protein homolog from Histophilus somni (strain 129Pt) (Haemophilus somnus).